Consider the following 398-residue polypeptide: Lipase member N (398 aa).

The signal sequence occupies residues 1–18 (MMWLLLTTTCLICGTLNA). One can recognise an AB hydrolase-1 domain in the interval 79 to 379 (PVVYMQHALF…DWNHFDFVWG (301 aa)). S173 serves as the catalytic Nucleophile. An intrachain disulfide couples C247 to C256. N272 carries N-linked (GlcNAc...) asparagine glycosylation. Active-site charge relay system residues include D344 and H373.

It belongs to the AB hydrolase superfamily. Lipase family. As to expression, highly expressed in the epidermis in the granular keratinocytes. Also detected in other tissues, although at much lower levels, including lung and spleen.

It localises to the secreted. It carries out the reaction a sterol ester + H2O = a sterol + a fatty acid + H(+). It catalyses the reaction a triacylglycerol + H2O = a 1,2-diacylglycerol + a fatty acid + H(+). The enzyme catalyses a triacylglycerol + H2O = a diacylglycerol + a fatty acid + H(+). The catalysed reaction is a cholesterol ester + H2O = cholesterol + a fatty acid + H(+). Its function is as follows. Plays a highly specific role in the last step of keratinocyte differentiation. Contains two distinct domains: the alpha/beta hydrolase fold and the abhydrolase-associated lipase region, also features the consensus sequence of the active site of a genuine lipase. May have an essential function in lipid metabolism of the most differentiated epidermal layers. This chain is Lipase member N (LIPN), found in Homo sapiens (Human).